The following is a 139-amino-acid chain: Transcription antitermination protein NusB (139 aa).

This sequence belongs to the NusB family.

Functionally, involved in transcription antitermination. Required for transcription of ribosomal RNA (rRNA) genes. Binds specifically to the boxA antiterminator sequence of the ribosomal RNA (rrn) operons. This is Transcription antitermination protein NusB from Escherichia coli (strain K12 / MC4100 / BW2952).